Here is a 151-residue protein sequence, read N- to C-terminus: Transcriptional regulator MraZ (151 aa).

SpoVT-AbrB domains lie at 5-52 (ANAI…PLDE) and 81-124 (AVDL…DEDA).

It belongs to the MraZ family. Forms oligomers.

It localises to the cytoplasm. It is found in the nucleoid. In Pseudomonas fluorescens (strain SBW25), this protein is Transcriptional regulator MraZ.